Reading from the N-terminus, the 115-residue chain is NADH-ubiquinone oxidoreductase chain 3 (115 aa).

3 helical membrane passes run Leu-3–Phe-23, Phe-56–Leu-76, and Pro-84–Tyr-104.

This sequence belongs to the complex I subunit 3 family.

It is found in the mitochondrion membrane. The enzyme catalyses a ubiquinone + NADH + 5 H(+)(in) = a ubiquinol + NAD(+) + 4 H(+)(out). Core subunit of the mitochondrial membrane respiratory chain NADH dehydrogenase (Complex I) that is believed to belong to the minimal assembly required for catalysis. Complex I functions in the transfer of electrons from NADH to the respiratory chain. The immediate electron acceptor for the enzyme is believed to be ubiquinone. This Polypterus ornatipinnis (Ornate bichir) protein is NADH-ubiquinone oxidoreductase chain 3 (MT-ND3).